We begin with the raw amino-acid sequence, 780 residues long: LPS-assembly protein LptD (780 aa).

The first 24 residues, 1–24 (MKKRFPTLLATLIWTALYSQHTLA), serve as a signal peptide directing secretion.

It belongs to the LptD family. As to quaternary structure, component of the lipopolysaccharide transport and assembly complex. Interacts with LptE and LptA.

It is found in the cell outer membrane. Functionally, together with LptE, is involved in the assembly of lipopolysaccharide (LPS) at the surface of the outer membrane. The polypeptide is LPS-assembly protein LptD (Yersinia pseudotuberculosis serotype I (strain IP32953)).